The chain runs to 140 residues: Gonadotropin subunit beta-2 (140 aa).

The first 23 residues, 1-23 (MSVPASSFLLLCFLMNSFSPAQS), serve as a signal peptide directing secretion. 6 disulfide bridges follow: Cys-29–Cys-77, Cys-43–Cys-92, Cys-46–Cys-130, Cys-54–Cys-108, Cys-58–Cys-110, and Cys-113–Cys-120. The N-linked (GlcNAc...) asparagine glycan is linked to Asn-33.

Belongs to the glycoprotein hormones subunit beta family. In terms of assembly, heterodimer of an alpha and a beta chain.

The protein resides in the secreted. Its function is as follows. Involved in gametogenesis and steroidogenesis. The protein is Gonadotropin subunit beta-2 (cgbb) of Ictalurus punctatus (Channel catfish).